The sequence spans 259 residues: Phosphate import ATP-binding protein PstB (259 aa).

The ABC transporter domain occupies 5–248; sequence IDVSGLHVYY…NKIFTKPEKK (244 aa). Residue 37–44 coordinates ATP; the sequence is GSSGCGKS.

This sequence belongs to the ABC transporter superfamily. Phosphate importer (TC 3.A.1.7) family. The complex is composed of two ATP-binding proteins (PstB), two transmembrane proteins (PstC and PstA) and a solute-binding protein (PstS).

It is found in the cell membrane. The enzyme catalyses phosphate(out) + ATP + H2O = ADP + 2 phosphate(in) + H(+). Part of the ABC transporter complex PstSACB involved in phosphate import. Responsible for energy coupling to the transport system. This Thermobifida fusca (strain YX) protein is Phosphate import ATP-binding protein PstB.